The chain runs to 296 residues: Protease HtpX homolog (296 aa).

Transmembrane regions (helical) follow at residues 14 to 34 (VFLLIGFLALVGIVGAAVGYL) and 38 to 58 (SLVTGIIGALLVGVIYAVIMI). Position 144 (His144) interacts with Zn(2+). Glu145 is an active-site residue. A Zn(2+)-binding site is contributed by His148. A run of 2 helical transmembrane segments spans residues 159 to 179 (IALALTAAISFLINLGSNWWL) and 198 to 218 (LLVFILSLVVMIFAPLVAAVI). Glu227 lines the Zn(2+) pocket.

This sequence belongs to the peptidase M48B family. Requires Zn(2+) as cofactor.

The protein resides in the cell membrane. The protein is Protease HtpX homolog of Leuconostoc citreum (strain KM20).